The chain runs to 218 residues: Thiopurine S-methyltransferase (218 aa).

W10, L45, E66, and R123 together coordinate S-adenosyl-L-methionine.

This sequence belongs to the class I-like SAM-binding methyltransferase superfamily. TPMT family.

It is found in the cytoplasm. It carries out the reaction S-adenosyl-L-methionine + a thiopurine = S-adenosyl-L-homocysteine + a thiopurine S-methylether.. This is Thiopurine S-methyltransferase from Shewanella sp. (strain MR-7).